Consider the following 281-residue polypeptide: Nuclear receptor-interacting protein 2 (281 aa).

A disordered region spans residues 18 to 85 (ESCSTGQRQA…RAHLSQQRRL (68 aa)). The segment covering 36 to 47 (TPPPSSPWPTPP) has biased composition (pro residues). The segment covering 55–78 (QEARRDEGEARTRGQEAQLRDRAH) has biased composition (basic and acidic residues). The short motif at 244-248 (LQTLL) is the LXXLL motif element.

In terms of assembly, interacts with NR1F2, RARA and THRB in a ligand-dependent manner.

It is found in the nucleus. Its function is as follows. Down-regulates transcriptional activation by nuclear receptors such as NR1F2. The protein is Nuclear receptor-interacting protein 2 (NRIP2) of Homo sapiens (Human).